A 204-amino-acid polypeptide reads, in one-letter code: Thiamine-phosphate synthase (204 aa).

4-amino-2-methyl-5-(diphosphooxymethyl)pyrimidine-binding positions include 32-36 (QLRMK) and aspartate 64. Mg(2+) is bound by residues aspartate 65 and aspartate 84. Threonine 103 is a binding site for 4-amino-2-methyl-5-(diphosphooxymethyl)pyrimidine. 2-[(2R,5Z)-2-carboxy-4-methylthiazol-5(2H)-ylidene]ethyl phosphate is bound at residue 129 to 131 (TTT). Lysine 132 contributes to the 4-amino-2-methyl-5-(diphosphooxymethyl)pyrimidine binding site. Glycine 165 lines the 2-[(2R,5Z)-2-carboxy-4-methylthiazol-5(2H)-ylidene]ethyl phosphate pocket.

The protein belongs to the thiamine-phosphate synthase family. Requires Mg(2+) as cofactor.

It carries out the reaction 2-[(2R,5Z)-2-carboxy-4-methylthiazol-5(2H)-ylidene]ethyl phosphate + 4-amino-2-methyl-5-(diphosphooxymethyl)pyrimidine + 2 H(+) = thiamine phosphate + CO2 + diphosphate. The enzyme catalyses 2-(2-carboxy-4-methylthiazol-5-yl)ethyl phosphate + 4-amino-2-methyl-5-(diphosphooxymethyl)pyrimidine + 2 H(+) = thiamine phosphate + CO2 + diphosphate. The catalysed reaction is 4-methyl-5-(2-phosphooxyethyl)-thiazole + 4-amino-2-methyl-5-(diphosphooxymethyl)pyrimidine + H(+) = thiamine phosphate + diphosphate. It functions in the pathway cofactor biosynthesis; thiamine diphosphate biosynthesis; thiamine phosphate from 4-amino-2-methyl-5-diphosphomethylpyrimidine and 4-methyl-5-(2-phosphoethyl)-thiazole: step 1/1. Its function is as follows. Condenses 4-methyl-5-(beta-hydroxyethyl)thiazole monophosphate (THZ-P) and 2-methyl-4-amino-5-hydroxymethyl pyrimidine pyrophosphate (HMP-PP) to form thiamine monophosphate (TMP). This Bacteroides fragilis (strain ATCC 25285 / DSM 2151 / CCUG 4856 / JCM 11019 / LMG 10263 / NCTC 9343 / Onslow / VPI 2553 / EN-2) protein is Thiamine-phosphate synthase.